Reading from the N-terminus, the 258-residue chain is Pyridoxal phosphate homeostasis protein (258 aa).

Lys47 is subject to N6-(pyridoxal phosphate)lysine.

The protein belongs to the pyridoxal phosphate-binding protein YggS/PROSC family.

Functionally, pyridoxal 5'-phosphate (PLP)-binding protein, which is involved in PLP homeostasis. This chain is Pyridoxal phosphate homeostasis protein, found in Mycobacterium bovis (strain ATCC BAA-935 / AF2122/97).